A 548-amino-acid chain; its full sequence is DNA ligase (548 aa).

Position 252 (E252) interacts with ATP. K254 functions as the N6-AMP-lysine intermediate in the catalytic mechanism. ATP is bound by residues R259, R274, E303, F343, R414, and K420.

Belongs to the ATP-dependent DNA ligase family. Mg(2+) is required as a cofactor.

The enzyme catalyses ATP + (deoxyribonucleotide)n-3'-hydroxyl + 5'-phospho-(deoxyribonucleotide)m = (deoxyribonucleotide)n+m + AMP + diphosphate.. Its function is as follows. DNA ligase that seals nicks in double-stranded DNA during DNA replication, DNA recombination and DNA repair. In Natronomonas pharaonis (strain ATCC 35678 / DSM 2160 / CIP 103997 / JCM 8858 / NBRC 14720 / NCIMB 2260 / Gabara) (Halobacterium pharaonis), this protein is DNA ligase.